The chain runs to 509 residues: Maturase K (509 aa).

Belongs to the intron maturase 2 family. MatK subfamily.

It localises to the plastid. Its subcellular location is the chloroplast. Functionally, usually encoded in the trnK tRNA gene intron. Probably assists in splicing its own and other chloroplast group II introns. The chain is Maturase K from Nymphaea odorata (White water lily).